We begin with the raw amino-acid sequence, 314 residues long: Trimethylamine N-oxide-binding protein (314 aa).

Positions 1–24 (MKKIVSLMSALVISVVSFAGISNA) are cleaved as a signal peptide. The trimethylamine N-oxide site is built by Trp-38, Trp-85, Glu-114, Trp-164, and Trp-212.

In terms of assembly, the complex is probably composed of two ATP-binding proteins (TmoW), two transmembrane proteins (TmoV) and a solute-binding protein (TmoX).

It is found in the periplasm. Part of the ABC transporter complex TmoXWV involved in trimethylamine N-oxide (TMAO) import. Possesses a high binding affinity toward TMAO, but presents little binding affinity toward betaine, carnitine, trimethylamine (TMA) or dimethylamine (DMA). This is Trimethylamine N-oxide-binding protein from Pelagibacter ubique (strain HTCC1062).